The chain runs to 587 residues: Cryptochrome-1 (587 aa).

One can recognise a Photolyase/cryptochrome alpha/beta domain in the interval 3-132; sequence VNAVHWFRKG…EVIVRISHTL (130 aa). A Glycyl lysine isopeptide (Lys-Gly) (interchain with G-Cter in ubiquitin) cross-link involves residue lysine 11. The LIR 1 signature appears at 50–54; it reads NRWRF. A Phosphoserine; by AMPK modification is found at serine 71. The short motif at 82–87 is the LIR 2 element; it reads DVFPRL. Residue lysine 107 forms a Glycyl lysine isopeptide (Lys-Gly) (interchain with G-Cter in ubiquitin) linkage. The LIR 3 motif lies at 151 to 156; sequence KRFQTL. Residue lysine 159 forms a Glycyl lysine isopeptide (Lys-Gly) (interchain with G-Cter in ubiquitin) linkage. Serine 247 is subject to Phosphoserine; by MAPK. Serine 252 serves as a coordination point for FAD. Short sequence motifs (LIR) lie at residues 255–260 and 271–276; these read LRFGCL and DLYKKV. Serine 280 carries the post-translational modification Phosphoserine; by AMPK. The LIR 6 signature appears at 285-290; the sequence is SLYGQL. FAD is bound at residue glutamine 289. A Glycyl lysine isopeptide (Lys-Gly) (interchain with G-Cter in ubiquitin) cross-link involves residue lysine 329. The LIR 7 signature appears at 335 to 339; that stretch reads TGFPW. Residue histidine 355 participates in FAD binding. Positions 371-470 are required for inhibition of CLOCK-BMAL1-mediated transcription; that stretch reads WISWEEGMKV…LIGVNYPKPM (100 aa). An LIR 8 motif is present at residues 379 to 384; it reads KVFEEL. FAD is bound at residue 387 to 389; that stretch reads DAD. 3 consecutive short sequence motifs (LIR) follow at residues 395–400, 411–416, and 430–435; these read GSWMWL, HCYCPV, and RRYLPV. The tract at residues 471–493 is interaction with TIMELESS; sequence VNHAEASRLNIERMKQIYQQLSR. A Glycyl lysine isopeptide (Lys-Gly) (interchain with G-Cter in ubiquitin) cross-link involves residue lysine 485. Short sequence motifs (LIR) lie at residues 486–491 and 492–497; these read QIYQQL and SRYRGL. Residues 554–587 form a disordered region; that stretch reads GSSSMGHGLSNGKRPSQEEDTQSIGPKVQRQSTN. Position 569 is a phosphoserine (serine 569).

It belongs to the DNA photolyase class-1 family. In terms of assembly, component of the circadian core oscillator, which includes the CRY proteins, CLOCK or NPAS2, BMAL1 or BMAL2, CSNK1D and/or CSNK1E, TIMELESS, and the PER proteins. Interacts directly with TIMELESS. Interacts directly with PER1, PER2 and PER3; interaction with PER2 inhibits its ubiquitination and vice versa. Interacts with FBXL21. Interacts with FBXL3. Interacts with CLOCK-BMAL1 independently of PER2 and DNA. Interacts with HDAC1, HDAC2 and SIN3B. Interacts with nuclear receptors AR, NR1D1, NR3C1/GR, RORA and RORC; the interaction with at least NR3C1/GR is ligand dependent. Interacts with PRKDC. Interacts with the G protein subunit alpha GNAS; the interaction may block GPCR-mediated regulation of cAMP concentrations. Interacts with PRMT5. Interacts with EZH2. Interacts with MYBBP1A, DOCK7, HNRNPU, RPL7A, RPL8 and RPS3. Interacts with PPP5C (via TPR repeats). Interacts with MAP1LC3B. Interacts with CLOCK. Interacts with BMAL1. Interacts weakly with HDAC3; this interaction is enhanced in the presence of FBXL3. Interacts with TRIM28, KCTD5 and DDB1 Interacts with HNF4A. Interacts with PSMD2 in a KDM8-dependent manner. Interacts with KDM8 in a FBXL3-dependent manner. Interacts with PPARG in a ligand-dependent manner. Interacts with PPARD (via domain NR LBD) and NR1I2 (via domain NR LBD) in a ligand-dependent manner. Interacts with PPARA, NR1I3 and VDR. FAD is required as a cofactor. The cofactor is (6R)-5,10-methylene-5,6,7,8-tetrahydrofolate. Post-translationally, phosphorylation on Ser-247 by MAPK is important for the inhibition of CLOCK-BMAL1-mediated transcriptional activity. Phosphorylation by CSNK1E requires interaction with PER1 or PER2. Phosphorylation at Ser-71 and Ser-280 by AMPK decreases protein stability. Phosphorylation at Ser-569 exhibits a robust circadian rhythm with a peak at CT8, increases protein stability, prevents SCF(FBXL3)-mediated degradation and is antagonized by interaction with PRKDC. Ubiquitinated by the SCF(FBXL3) and SCF(FBXL21) complexes, regulating the balance between degradation and stabilization. The SCF(FBXL3) complex is mainly nuclear and mediates ubiquitination and subsequent degradation of CRY1. In contrast, cytoplasmic SCF(FBXL21) complex-mediated ubiquitination leads to stabilize CRY1 and counteract the activity of the SCF(FBXL3) complex. The SCF(FBXL3) and SCF(FBXL21) complexes probably mediate ubiquitination at different Lys residues. Ubiquitination at Lys-11 and Lys-107 are specifically ubiquitinated by the SCF(FBXL21) complex but not by the SCF(FBXL3) complex. Ubiquitination may be inhibited by PER2. Deubiquitinated by USP7. In terms of processing, undergoes autophagy-mediated degradation in the liver in a time-dependent manner. Autophagic degradation of CRY1 (an inhibitor of gluconeogenesis) occurs during periods of reduced feeding allowing induction of gluconeogenesis and maintenance of blood glucose levels. As to expression, expressed in all tissues tested including spleen, liver, skeletal muscle, kidney, brain, intestine, eye, harderian gland, liver and heart. Highest levels in the eye, brain, kidney and harderian gland. In the brain, especially located to the suprachiasma nucleus (SCN).

Its subcellular location is the cytoplasm. The protein localises to the nucleus. Its function is as follows. Transcriptional repressor which forms a core component of the circadian clock. The circadian clock, an internal time-keeping system, regulates various physiological processes through the generation of approximately 24 hour circadian rhythms in gene expression, which are translated into rhythms in metabolism and behavior. It is derived from the Latin roots 'circa' (about) and 'diem' (day) and acts as an important regulator of a wide array of physiological functions including metabolism, sleep, body temperature, blood pressure, endocrine, immune, cardiovascular, and renal function. Consists of two major components: the central clock, residing in the suprachiasmatic nucleus (SCN) of the brain, and the peripheral clocks that are present in nearly every tissue and organ system. Both the central and peripheral clocks can be reset by environmental cues, also known as Zeitgebers (German for 'timegivers'). The predominant Zeitgeber for the central clock is light, which is sensed by retina and signals directly to the SCN. The central clock entrains the peripheral clocks through neuronal and hormonal signals, body temperature and feeding-related cues, aligning all clocks with the external light/dark cycle. Circadian rhythms allow an organism to achieve temporal homeostasis with its environment at the molecular level by regulating gene expression to create a peak of protein expression once every 24 hours to control when a particular physiological process is most active with respect to the solar day. Transcription and translation of core clock components (CLOCK, NPAS2, BMAL1, BMAL2, PER1, PER2, PER3, CRY1 and CRY2) plays a critical role in rhythm generation, whereas delays imposed by post-translational modifications (PTMs) are important for determining the period (tau) of the rhythms (tau refers to the period of a rhythm and is the length, in time, of one complete cycle). A diurnal rhythm is synchronized with the day/night cycle, while the ultradian and infradian rhythms have a period shorter and longer than 24 hours, respectively. Disruptions in the circadian rhythms contribute to the pathology of cardiovascular diseases, cancer, metabolic syndromes and aging. A transcription/translation feedback loop (TTFL) forms the core of the molecular circadian clock mechanism. Transcription factors, CLOCK or NPAS2 and BMAL1 or BMAL2, form the positive limb of the feedback loop, act in the form of a heterodimer and activate the transcription of core clock genes and clock-controlled genes (involved in key metabolic processes), harboring E-box elements (5'-CACGTG-3') within their promoters. The core clock genes: PER1/2/3 and CRY1/2 which are transcriptional repressors form the negative limb of the feedback loop and interact with the CLOCK|NPAS2-BMAL1|BMAL2 heterodimer inhibiting its activity and thereby negatively regulating their own expression. This heterodimer also activates nuclear receptors NR1D1/2 and RORA/B/G, which form a second feedback loop and which activate and repress BMAL1 transcription, respectively. CRY1 and CRY2 have redundant functions but also differential and selective contributions at least in defining the pace of the SCN circadian clock and its circadian transcriptional outputs. More potent transcriptional repressor in cerebellum and liver than CRY2, though more effective in lengthening the period of the SCN oscillator. On its side, CRY2 seems to play a critical role in tuning SCN circadian period by opposing the action of CRY1. With CRY2, is dispensable for circadian rhythm generation but necessary for the development of intercellular networks for rhythm synchrony. Capable of translocating circadian clock core proteins such as PER proteins to the nucleus. Interacts with CLOCK-BMAL1 independently of PER proteins and is found at CLOCK-BMAL1-bound sites, suggesting that CRY may act as a molecular gatekeeper to maintain CLOCK-BMAL1 in a poised and repressed state until the proper time for transcriptional activation. Represses the CLOCK-BMAL1 induced transcription of BHLHE40/DEC1, ATF4, MTA1, KLF10 and NAMPT. May repress circadian target genes expression in collaboration with HDAC1 and HDAC2 through histone deacetylation. Mediates the clock-control activation of ATR and modulates ATR-mediated DNA damage checkpoint. In liver, mediates circadian regulation of cAMP signaling and gluconeogenesis by binding to membrane-coupled G proteins and blocking glucagon-mediated increases in intracellular cAMP concentrations and CREB1 phosphorylation. Inhibits hepatic gluconeogenesis by decreasing nuclear FOXO1 levels that down-regulates gluconeogenic gene expression. Besides its role in the maintenance of the circadian clock, is also involved in the regulation of other processes. Represses glucocorticoid receptor NR3C1/GR-induced transcriptional activity by binding to glucocorticoid response elements (GREs). Plays a key role in glucose and lipid metabolism modulation, in part, through the transcriptional regulation of genes involved in these pathways, such as LEP or ACSL4. Represses PPARD and its target genes in the skeletal muscle and limits exercise capacity. Plays an essential role in the generation of circadian rhythms in the retina. Represses the transcriptional activity of NR1I2. The chain is Cryptochrome-1 (CRY1) from Spalax judaei (Judean Mountains blind mole rat).